The sequence spans 689 residues: MLRSITLSPTRRFGFPPRCVSFTTIKELILTEENDGSSLHYAASSPCFLLLSKCTNIDSLRQSHGVLTGNGLMGDISIATKLVSLYGFFGYTKDARLVFDQIPEPDFYLWKVMLRCYCLNKESVEVVKLYDLLMKHGFRYDDIVFSKALKACTELQDLDNGKKIHCQLVKVPSFDNVVLTGLLDMYAKCGEIKSAHKVFNDITLRNVVCWTSMIAGYVKNDLCEEGLVLFNRMRENNVLGNEYTYGTLIMACTKLSALHQGKWFHGCLVKSGIELSSCLVTSLLDMYVKCGDISNARRVFNEHSHVDLVMWTAMIVGYTHNGSVNEALSLFQKMKGVEIKPNCVTIASVLSGCGLIENLELGRSVHGLSIKVGIWDTNVANALVHMYAKCYQNRDAKYVFEMESEKDIVAWNSIISGFSQNGSIHEALFLFHRMNSESVTPNGVTVASLFSACASLGSLAVGSSLHAYSVKLGFLASSSVHVGTALLDFYAKCGDPQSARLIFDTIEEKNTITWSAMIGGYGKQGDTIGSLELFEEMLKKQQKPNESTFTSILSACGHTGMVNEGKKYFSSMYKDYNFTPSTKHYTCMVDMLARAGELEQALDIIEKMPIQPDVRCFGAFLHGCGMHSRFDLGEIVIKKMLDLHPDDASYYVLVSNLYASDGRWNQAKEVRNLMKQRGLSKIAGHSTME.

Residues 1 to 12 (MLRSITLSPTRR) constitute a mitochondrion transit peptide. PPR repeat units lie at residues 75 to 105 (DISI…IPEP), 106 to 140 (DFYL…GFRY), 141 to 171 (DDIV…LVKV), 175 to 205 (DNVV…ITLR), 206 to 240 (NVVC…NVLG), 241 to 275 (NEYT…GIEL), 276 to 306 (SSCL…HSHV), 307 to 341 (DLVM…EIKP), 342 to 372 (NCVT…SIKV), 376 to 406 (DTNV…ESEK), 407 to 441 (DIVA…SVTP), 442 to 476 (NGVT…GFLA), 479 to 509 (SVHV…IEEK), 510 to 544 (NTIT…QQKP), 545 to 580 (NEST…NFTP), and 581 to 611 (STKH…MPIQ). Residues 616–689 (CFGAFLHGCG…SKIAGHSTME (74 aa)) form a type E motif; degenerate region.

It belongs to the PPR family. PCMP-E subfamily.

The protein resides in the mitochondrion. This is Pentatricopeptide repeat-containing protein At2g03380, mitochondrial (PCMP-E47) from Arabidopsis thaliana (Mouse-ear cress).